We begin with the raw amino-acid sequence, 785 residues long: Phosphoinositide phosphatase SAC5 (785 aa).

Positions 158-533 constitute an SAC domain; that stretch reads LSVVDLSKNF…GNTLAMQYGG (376 aa). Residues 469-480 carry the Phosphatase catalytic core motif; that stretch reads RTNCIDCLDRTN. Residues 688-700 are compositionally biased toward polar residues; sequence GSGQMFQGSSSNS. The interval 688-707 is disordered; that stretch reads GSGQMFQGSSSNSDSHRPND.

In terms of assembly, component of the PI(3,5)P2 regulatory complex at least composed of ATG18, SAC/FIG4, FAB1 and VAC14. Mg(2+) is required as a cofactor. In terms of tissue distribution, ubiquitous with a higher level of expression in young seedlings than in other tissues.

It localises to the vacuole membrane. The catalysed reaction is a 1,2-diacyl-sn-glycero-3-phospho-(1D-myo-inositol-3,5-bisphosphate) + H2O = a 1,2-diacyl-sn-glycero-3-phospho-(1D-myo-inositol-3-phosphate) + phosphate. Functionally, the PI(3,5)P2 regulatory complex regulates both the synthesis and turnover of phosphatidylinositol 3,5-bisphosphate (PtdIns(3,5)P2). This Arabidopsis thaliana (Mouse-ear cress) protein is Phosphoinositide phosphatase SAC5 (SAC5).